The sequence spans 235 residues: Ferric nitrobindin-like protein (235 aa).

The segment at 1-59 is disordered; that stretch reads MSDLASEGSDPAERASEHSNGNAPADRPARRSGDQAVADAAERAKATGSRNIPVLPDLP. The short motif at 85-91 is the GXWXGXG element; it reads GVWRGEG.

The protein belongs to the nitrobindin family.

The polypeptide is Ferric nitrobindin-like protein (Nocardia farcinica (strain IFM 10152)).